The chain runs to 310 residues: Homoserine kinase (310 aa).

95 to 105 (PQSRGLGSSAA) contacts ATP.

This sequence belongs to the GHMP kinase family. Homoserine kinase subfamily.

The protein localises to the cytoplasm. It catalyses the reaction L-homoserine + ATP = O-phospho-L-homoserine + ADP + H(+). It functions in the pathway amino-acid biosynthesis; L-threonine biosynthesis; L-threonine from L-aspartate: step 4/5. In terms of biological role, catalyzes the ATP-dependent phosphorylation of L-homoserine to L-homoserine phosphate. The polypeptide is Homoserine kinase (Corynebacterium kroppenstedtii (strain DSM 44385 / JCM 11950 / CIP 105744 / CCUG 35717)).